A 272-amino-acid polypeptide reads, in one-letter code: MLTKRIIPCLDIKEGRVVKGTNFVELRDAGDPVELSKIYNEQGADELVFLDITASFEKRDIIIDVVKRTAEQVFIPLTVGGGIKTVDDFRKILRAGADKISINTSAVKTPELIKEASEIFGTQCVVVAMDVKRNYITDIQDENLKDKNVFETELGSCWFEVYIYGGREGTGIDAIEWAKKVENLGAGEILLTSMDADGTKDGYDLVLTKSISKNTNLPIIASGGCGNSKHVVDAFKDGKADAALMASILHYRECTVNDLKKEIEKNNISVRL.

Catalysis depends on residues Asp11 and Asp130.

Belongs to the HisA/HisF family. As to quaternary structure, heterodimer of HisH and HisF.

It localises to the cytoplasm. It catalyses the reaction 5-[(5-phospho-1-deoxy-D-ribulos-1-ylimino)methylamino]-1-(5-phospho-beta-D-ribosyl)imidazole-4-carboxamide + L-glutamine = D-erythro-1-(imidazol-4-yl)glycerol 3-phosphate + 5-amino-1-(5-phospho-beta-D-ribosyl)imidazole-4-carboxamide + L-glutamate + H(+). The protein operates within amino-acid biosynthesis; L-histidine biosynthesis; L-histidine from 5-phospho-alpha-D-ribose 1-diphosphate: step 5/9. Functionally, IGPS catalyzes the conversion of PRFAR and glutamine to IGP, AICAR and glutamate. The HisF subunit catalyzes the cyclization activity that produces IGP and AICAR from PRFAR using the ammonia provided by the HisH subunit. The protein is Imidazole glycerol phosphate synthase subunit HisF of Methanococcus maripaludis (strain C5 / ATCC BAA-1333).